The following is a 395-amino-acid chain: Putative 8-amino-7-oxononanoate synthase (395 aa).

Residue arginine 23 coordinates substrate. Residue 110–111 (GY) coordinates pyridoxal 5'-phosphate. Histidine 135 is a binding site for substrate. Residues serine 182, 207–210 (DEAH), and 239–242 (TFSK) each bind pyridoxal 5'-phosphate. Residue lysine 242 is modified to N6-(pyridoxal phosphate)lysine. Position 356 (threonine 356) interacts with substrate.

Belongs to the class-II pyridoxal-phosphate-dependent aminotransferase family. BioF subfamily. As to quaternary structure, homodimer. Pyridoxal 5'-phosphate is required as a cofactor.

The catalysed reaction is 6-carboxyhexanoyl-[ACP] + L-alanine + H(+) = (8S)-8-amino-7-oxononanoate + holo-[ACP] + CO2. Its pathway is cofactor biosynthesis; biotin biosynthesis. Functionally, catalyzes the decarboxylative condensation of pimeloyl-[acyl-carrier protein] and L-alanine to produce 8-amino-7-oxononanoate (AON), [acyl-carrier protein], and carbon dioxide. This chain is Putative 8-amino-7-oxononanoate synthase (bioF), found in Bacillus mycoides (strain KBAB4) (Bacillus weihenstephanensis).